Here is a 137-residue protein sequence, read N- to C-terminus: Small ribosomal subunit protein uS12 (137 aa).

The tract at residues 1-26 (MPTINQLVRKPRQSKIKKSTSPALNK) is disordered. The span at 9-18 (RKPRQSKIKK) shows a compositional bias: basic residues.

Belongs to the universal ribosomal protein uS12 family. As to quaternary structure, part of the 30S ribosomal subunit. Contacts proteins S8 and S17. May interact with IF1 in the 30S initiation complex.

Functionally, with S4 and S5 plays an important role in translational accuracy. Interacts with and stabilizes bases of the 16S rRNA that are involved in tRNA selection in the A site and with the mRNA backbone. Located at the interface of the 30S and 50S subunits, it traverses the body of the 30S subunit contacting proteins on the other side and probably holding the rRNA structure together. The combined cluster of proteins S8, S12 and S17 appears to hold together the shoulder and platform of the 30S subunit. In Listeria innocua serovar 6a (strain ATCC BAA-680 / CLIP 11262), this protein is Small ribosomal subunit protein uS12.